The sequence spans 328 residues: tRNA uridine(34) hydroxylase (328 aa).

In terms of domain architecture, Rhodanese spans 123-217; the sequence is SDPDVLLVDT…YLEEVPQEES (95 aa). The Cysteine persulfide intermediate role is filled by cysteine 177.

It belongs to the TrhO family.

The catalysed reaction is uridine(34) in tRNA + AH2 + O2 = 5-hydroxyuridine(34) in tRNA + A + H2O. In terms of biological role, catalyzes oxygen-dependent 5-hydroxyuridine (ho5U) modification at position 34 in tRNAs. This chain is tRNA uridine(34) hydroxylase, found in Psychromonas ingrahamii (strain DSM 17664 / CCUG 51855 / 37).